The primary structure comprises 412 residues: L-cysteine:1D-myo-inositol 2-amino-2-deoxy-alpha-D-glucopyranoside ligase (412 aa).

Cys43 provides a ligand contact to Zn(2+). Residues 43–46 (CGIT), Thr58, and 81–83 (NVT) each bind L-cysteinyl-5'-AMP. The 'HIGH' region signature appears at 45 to 55 (ITPYDATHLGH). The 'ERGGDP' region motif lies at 186–191 (ERGGDP). Trp227 serves as a coordination point for L-cysteinyl-5'-AMP. Cys231 serves as a coordination point for Zn(2+). 249 to 251 (GND) serves as a coordination point for L-cysteinyl-5'-AMP. Residue His256 participates in Zn(2+) binding. Residue Ile283 coordinates L-cysteinyl-5'-AMP. The 'KMSKS' region signature appears at 289–293 (KMSKS).

The protein belongs to the class-I aminoacyl-tRNA synthetase family. MshC subfamily. As to quaternary structure, monomer. Zn(2+) serves as cofactor.

The catalysed reaction is 1D-myo-inositol 2-amino-2-deoxy-alpha-D-glucopyranoside + L-cysteine + ATP = 1D-myo-inositol 2-(L-cysteinylamino)-2-deoxy-alpha-D-glucopyranoside + AMP + diphosphate + H(+). Catalyzes the ATP-dependent condensation of GlcN-Ins and L-cysteine to form L-Cys-GlcN-Ins. This Salinispora arenicola (strain CNS-205) protein is L-cysteine:1D-myo-inositol 2-amino-2-deoxy-alpha-D-glucopyranoside ligase.